The primary structure comprises 122 residues: Small ribosomal subunit protein uS13 (122 aa).

The tract at residues 99 to 122 (RGQRTHTNARTRKGPAKAIAGKKK) is disordered.

It belongs to the universal ribosomal protein uS13 family. As to quaternary structure, part of the 30S ribosomal subunit. Forms a loose heterodimer with protein S19. Forms two bridges to the 50S subunit in the 70S ribosome.

Located at the top of the head of the 30S subunit, it contacts several helices of the 16S rRNA. In the 70S ribosome it contacts the 23S rRNA (bridge B1a) and protein L5 of the 50S subunit (bridge B1b), connecting the 2 subunits; these bridges are implicated in subunit movement. Contacts the tRNAs in the A and P-sites. The chain is Small ribosomal subunit protein uS13 from Rhizobium meliloti (strain 1021) (Ensifer meliloti).